Reading from the N-terminus, the 372-residue chain is Riboflavin biosynthesis protein RibD (372 aa).

One can recognise a CMP/dCMP-type deaminase domain in the interval 1-122 (MKDIFYMKKA…KWLKKHGILV (122 aa)). A deaminase region spans residues 1-145 (MKDIFYMKKA…KGFFQRMTTG (145 aa)). Zn(2+) is bound at residue His-50. The active-site Proton donor is the Glu-52. Residues Cys-75 and Cys-84 each coordinate Zn(2+). The segment at 146-372 (IPWIKLKLAS…KLILTKHNSS (227 aa)) is reductase. Ala-154 is a binding site for NADP(+). Ser-168 contributes to the substrate binding site. Trp-170 lines the NADP(+) pocket. Arg-184 is a binding site for substrate. Residues Thr-196 and Asp-200 each coordinate NADP(+). Leu-204 and Arg-207 together coordinate substrate. Residue Ser-236 participates in NADP(+) binding. Glu-301 lines the substrate pocket. NADP(+) is bound at residue 303–309 (GPSLSSS).

It in the N-terminal section; belongs to the cytidine and deoxycytidylate deaminase family. In the C-terminal section; belongs to the HTP reductase family. Requires Zn(2+) as cofactor.

It catalyses the reaction 2,5-diamino-6-hydroxy-4-(5-phosphoribosylamino)-pyrimidine + H2O + H(+) = 5-amino-6-(5-phospho-D-ribosylamino)uracil + NH4(+). The catalysed reaction is 5-amino-6-(5-phospho-D-ribitylamino)uracil + NADP(+) = 5-amino-6-(5-phospho-D-ribosylamino)uracil + NADPH + H(+). Its pathway is cofactor biosynthesis; riboflavin biosynthesis; 5-amino-6-(D-ribitylamino)uracil from GTP: step 2/4. It functions in the pathway cofactor biosynthesis; riboflavin biosynthesis; 5-amino-6-(D-ribitylamino)uracil from GTP: step 3/4. Its function is as follows. Converts 2,5-diamino-6-(ribosylamino)-4(3h)-pyrimidinone 5'-phosphate into 5-amino-6-(ribosylamino)-2,4(1h,3h)-pyrimidinedione 5'-phosphate. This chain is Riboflavin biosynthesis protein RibD (ribD), found in Buchnera aphidicola subsp. Baizongia pistaciae (strain Bp).